The following is a 975-amino-acid chain: E3 ubiquitin-protein ligase NEDD4-like (975 aa).

N-acetylalanine is present on alanine 2. The C2 domain maps to 4–126 (GLGEPVYGLS…TEDPTMERPY (123 aa)). Disordered stretches follow at residues 178-202 (DSND…WEEK), 244-272 (AAHR…VPEP), and 285-312 (DSLG…EELS). Residues 193–226 (PPLPPGWEEKVDNLGRTYYVNHNNRTTQWHRPSL) enclose the WW 1 domain. Serine 312 is subject to Phosphoserine. A Phosphothreonine modification is found at threonine 318. At serine 342 the chain carries Phosphoserine; by WNK1 and WNK4. 2 disordered regions span residues 349 to 393 (EQGH…GWEE) and 424 to 496 (GASG…KVTQ). Threonine 367 carries the post-translational modification Phosphothreonine; by SGK1. One can recognise a WW 2 domain in the interval 385 to 418 (PGLPSGWEERKDAKGRTYYVNHNNRTTTWTRPIM). Serine 446 is subject to Phosphoserine. Serine 448 is modified (phosphoserine; by PKA and SGK1). At serine 449 the chain carries Phosphoserine; by WNK1 and WNK4. Residues 460–471 (GAKDSPVRRAVK) are compositionally biased toward basic and acidic residues. Phosphoserine occurs at positions 464, 475, 479, 483, and 487. 2 consecutive WW domains span residues 497-530 (SFLP…DPRL) and 548-581 (GPLP…DPRL). Residues 640 to 974 (RPDVLKARLW…VENAQGFEGV (335 aa)) enclose the HECT domain. Residue cysteine 942 is the Glycyl thioester intermediate of the active site.

As to quaternary structure, interacts with UBE2E3. Interacts with NDFIP1; this interaction activates the E3 ubiquitin-protein ligase. Interacts with NDFIP2; this interaction activates the E3 ubiquitin-protein ligase. Interacts (via WW domains) with SCN1A. Interacts (via WW domains) with SCN2A. Interacts (via WW domains) with SCN3A. Interacts (via WW domains) with SCN5A. Interacts (via WW domains) with SCN8A. Interacts (via WW domains) with SCN9A. Interacts (via WW domains) with SCN10A. Interacts (via WW domains) with CLCN5. Interacts with SMAD2. Interacts with SMAD3. Interacts with SMAD6. Interacts with SMAD7. The phosphorylated form interacts with 14-3-3 proteins. Interacts with TNK2. Interacts with WNK1. Interacts with SGK1. Interacts (via C2 domain) with NPC2. Interacts with ARRDC4. Interacts with KCNQ1; promotes internalization of KCNQ1. Interacts (via domains WW1, 3 and 4) with USP36; the interaction inhibits ubiquitination of, at least, NTRK1, KCNQ2 and KCNQ3 by NEDD4L. Interacts with PRRG4 (via cytoplasmic domain). Interacts with LDLRAD3; the interaction is direct. Interacts with UBE2D2. Interacts with TTYH2 and TTYH3. (Microbial infection) Interacts with Epstein-Barr virus LMP2A. In terms of processing, phosphorylated by SGK1 or PKA; which impairs interaction with SCNN. Interaction with YWHAH inhibits dephosphorylation. Auto-ubiquitinated. Deubiquitinated by USP36, no effect on NEDD4L protein levels. Both proteins interact and regulate each other's ubiquitination levels. Ubiquitously expressed, with highest levels in prostate, pancreas, and kidney. Expressed in melanocytes.

The protein localises to the cytoplasm. Its subcellular location is the golgi apparatus. The protein resides in the endosome. It localises to the multivesicular body. The catalysed reaction is S-ubiquitinyl-[E2 ubiquitin-conjugating enzyme]-L-cysteine + [acceptor protein]-L-lysine = [E2 ubiquitin-conjugating enzyme]-L-cysteine + N(6)-ubiquitinyl-[acceptor protein]-L-lysine.. It carries out the reaction [E2 ubiquitin-conjugating enzyme]-S-ubiquitinyl-L-cysteine + [acceptor protein]-L-cysteine = [E2 ubiquitin-conjugating enzyme]-L-cysteine + [acceptor protein]-S-ubiquitinyl-L-cysteine.. It functions in the pathway protein modification; protein ubiquitination. Activated by NDFIP1- and NDFIP2-binding. E3 ubiquitin-protein ligase that mediates the polyubiquitination of lysine and cysteine residues on target proteins and is thereby implicated in the regulation of various signaling pathways including autophagy, innate immunity or DNA repair. Inhibits TGF-beta signaling by triggering SMAD2 and TGFBR1 ubiquitination and proteasome-dependent degradation. Downregulates autophagy and cell growth by ubiquitinating and reducing cellular ULK1 or ASCT2 levels. Promotes ubiquitination and internalization of various plasma membrane channels such as ENaC, SCN2A/Nav1.2, SCN3A/Nav1.3, SCN5A/Nav1.5, SCN9A/Nav1.7, SCN10A/Nav1.8, KCNA3/Kv1.3, KCNH2, EAAT1, KCNQ2/Kv7.2, KCNQ3/Kv7.3 or CLC5. Promotes ubiquitination and degradation of SGK1 and TNK2. Ubiquitinates BRAT1 and this ubiquitination is enhanced in the presence of NDFIP1. Plays a role in dendrite formation by melanocytes. Involved in the regulation of TOR signaling. Ubiquitinates and regulates protein levels of NTRK1 once this one is activated by NGF. Plays a role in antiviral innate immunity by catalyzing 'Lys-29'-linked cysteine ubiquitination of TRAF3, resulting in enhanced 'Lys-48' and 'Lys-63'-linked ubiquitination of TRAF3. Ubiquitinates TTYH2 and TTYH3 and regulates protein levels of TTYH2. This is E3 ubiquitin-protein ligase NEDD4-like from Homo sapiens (Human).